A 139-amino-acid polypeptide reads, in one-letter code: Actin-depolymerizing factor 9 (139 aa).

Residues 7 to 139 (GLAVNDECKF…SLDIIRARAH (133 aa)) enclose the ADF-H domain.

This sequence belongs to the actin-binding proteins ADF family.

Functionally, actin-depolymerizing protein. Severs actin filaments (F-actin) and binds to actin monomers. In Oryza sativa subsp. japonica (Rice), this protein is Actin-depolymerizing factor 9 (ADF9).